Reading from the N-terminus, the 183-residue chain is Beta-defensin 129 (183 aa).

The N-terminal stretch at 1 to 19 (MKLLFPVFASLMLQYQVNT) is a signal peptide. 3 disulfides stabilise this stretch: Cys-27/Cys-53, Cys-34/Cys-48, and Cys-38/Cys-54. The disordered stretch occupies residues 141-183 (TATSTKSNTKESRDSATASPPPAPPPPNILPTPSLELEKAEEQ). The segment covering 159-170 (SPPPAPPPPNIL) has biased composition (pro residues).

It belongs to the beta-defensin family.

It localises to the secreted. Has antibacterial activity. In Pongo pygmaeus (Bornean orangutan), this protein is Beta-defensin 129 (DEFB129).